A 223-amino-acid chain; its full sequence is ATP phosphoribosyltransferase (223 aa).

Belongs to the ATP phosphoribosyltransferase family. Short subfamily. Heteromultimer composed of HisG and HisZ subunits.

The protein resides in the cytoplasm. The enzyme catalyses 1-(5-phospho-beta-D-ribosyl)-ATP + diphosphate = 5-phospho-alpha-D-ribose 1-diphosphate + ATP. It functions in the pathway amino-acid biosynthesis; L-histidine biosynthesis; L-histidine from 5-phospho-alpha-D-ribose 1-diphosphate: step 1/9. Its function is as follows. Catalyzes the condensation of ATP and 5-phosphoribose 1-diphosphate to form N'-(5'-phosphoribosyl)-ATP (PR-ATP). Has a crucial role in the pathway because the rate of histidine biosynthesis seems to be controlled primarily by regulation of HisG enzymatic activity. This is ATP phosphoribosyltransferase from Sphingopyxis alaskensis (strain DSM 13593 / LMG 18877 / RB2256) (Sphingomonas alaskensis).